The following is a 352-amino-acid chain: Putative F-box protein At5g14160 (352 aa).

The F-box domain occupies Gly-14 to Gln-60.

In Arabidopsis thaliana (Mouse-ear cress), this protein is Putative F-box protein At5g14160.